Consider the following 932-residue polypeptide: Calpain-like protease palB/cpr-8 (932 aa).

In terms of domain architecture, Calpain catalytic spans 96–419 (KLHGNIFPPW…FDSLYVNWSP (324 aa)). Catalysis depends on residues C178, H346, and N366. Residues 890–932 (QGHVTEGSDDDGGGGGGGGGGVHVEISSDGVVSIGEWEVADED) form a disordered region. A compositionally biased stretch (gly residues) spans 902-911 (GGGGGGGGGV).

Belongs to the peptidase C2 family. PalB/RIM13 subfamily.

Functionally, required for the proteolytic cleavage of the transcription factor pacc-1 in response to alkaline ambient pH. The polypeptide is Calpain-like protease palB/cpr-8 (cpr-8) (Neurospora crassa (strain ATCC 24698 / 74-OR23-1A / CBS 708.71 / DSM 1257 / FGSC 987)).